Reading from the N-terminus, the 209-residue chain is Max dimerization protein 4 (209 aa).

The segment at 6–23 is interaction with SIN3A and SIN3B; the sequence is LLLLLEAAEYLERRDREA. The bHLH domain occupies 53 to 105; sequence NNRSSHNELEKHRRAKLRLYLEQLKQLGPLGPDSTRHTTLSLLKRAKMHIKKL. Residues 137 to 209 form a disordered region; sequence SVERVRTDST…CRRPGCPGLS (73 aa). The segment covering 153–163 has biased composition (acidic residues); sequence DDSEQEVDIEG. Residues 185–195 are compositionally biased toward polar residues; sequence SLQSSGCSDSS.

In terms of assembly, efficient DNA binding requires dimerization with another bHLH protein. Binds DNA as a heterodimer with MAX. Interacts with SIN3A AND SIN3B. Interacts with RNF17.

The protein resides in the nucleus. In terms of biological role, transcriptional repressor. Binds with MAX to form a sequence-specific DNA-binding protein complex which recognizes the core sequence 5'-CAC[GA]TG-3'. Antagonizes MYC transcriptional activity by competing for MAX and suppresses MYC dependent cell transformation. This chain is Max dimerization protein 4 (Mxd4), found in Mus musculus (Mouse).